A 525-amino-acid chain; its full sequence is Peptide chain release factor 3 (525 aa).

A tr-type G domain is found at 11–279 (ERRRTFAIIS…AFVDMAPAPE (269 aa)). GTP-binding positions include 20 to 27 (SHPDAGKT), 88 to 92 (DTPGH), and 142 to 145 (NKLD).

Belongs to the TRAFAC class translation factor GTPase superfamily. Classic translation factor GTPase family. PrfC subfamily.

It is found in the cytoplasm. Increases the formation of ribosomal termination complexes and stimulates activities of RF-1 and RF-2. It binds guanine nucleotides and has strong preference for UGA stop codons. It may interact directly with the ribosome. The stimulation of RF-1 and RF-2 is significantly reduced by GTP and GDP, but not by GMP. The chain is Peptide chain release factor 3 from Latilactobacillus sakei subsp. sakei (strain 23K) (Lactobacillus sakei subsp. sakei).